A 303-amino-acid polypeptide reads, in one-letter code: 2-dehydropantoate 2-reductase (303 aa).

NADP(+) is bound by residues 7–12 (GCGALG), Asn98, and Ala122. Residue Asn98 participates in substrate binding. Lys176 functions as the Proton donor in the catalytic mechanism. Residues Asn180, Asn184, Asn194, and Ser244 each coordinate substrate. Glu256 lines the NADP(+) pocket.

The protein belongs to the ketopantoate reductase family. As to quaternary structure, monomer.

It localises to the cytoplasm. The catalysed reaction is (R)-pantoate + NADP(+) = 2-dehydropantoate + NADPH + H(+). The protein operates within cofactor biosynthesis; (R)-pantothenate biosynthesis; (R)-pantoate from 3-methyl-2-oxobutanoate: step 2/2. Functionally, catalyzes the NADPH-dependent reduction of ketopantoate into pantoic acid. Has a strong preference for NADPH over NADH as the electron acceptor. Pantoate, ketoisovalerate, oxaloacetate, pyruvate, 3-hydroxypyruvate, alpha-ketoglutarate, alpha-ketobutyrate, and acetaldehyde cannot serve as substrates for reduction. The sequence is that of 2-dehydropantoate 2-reductase from Salmonella typhimurium (strain LT2 / SGSC1412 / ATCC 700720).